The chain runs to 450 residues: Phosphoglucosamine mutase 2 (450 aa).

Residue Ser-101 is the Phosphoserine intermediate of the active site. Mg(2+) contacts are provided by Ser-101, Asp-245, Asp-247, and Asp-249. Ser-101 carries the phosphoserine modification.

The protein belongs to the phosphohexose mutase family. It depends on Mg(2+) as a cofactor. Post-translationally, activated by phosphorylation.

The catalysed reaction is alpha-D-glucosamine 1-phosphate = D-glucosamine 6-phosphate. In terms of biological role, catalyzes the conversion of glucosamine-6-phosphate to glucosamine-1-phosphate. The sequence is that of Phosphoglucosamine mutase 2 from Shewanella sp. (strain MR-4).